Consider the following 891-residue polypeptide: Targeting protein for Xklp2 homolog (891 aa).

Over residues 42–54 the composition is skewed to basic and acidic residues; sequence HENGVPLTFDDKA. Disordered regions lie at residues 42-310, 418-454, 472-518, 723-746, and 789-891; these read HENG…KSCP, NLRK…SFSG, HTKT…NRHR, CSGV…AEKG, and STKP…SHTS. A compositionally biased stretch (polar residues) spans 108-124; that stretch reads DDVSSAESETCEMSTDS. A compositionally biased stretch (acidic residues) spans 141-154; it reads DDEATVQESSDAEE. Residues 155 to 173 show a composition bias toward polar residues; it reads TQTLPSSCVDSSTAEMSTD. Over residues 236-246 the composition is skewed to basic residues; the sequence is PTRKSPRLHSR. The span at 442–454 shows a compositional bias: basic and acidic residues; that stretch reads DNRKRTHEESFSG. The segment covering 791–802 has biased composition (polar residues); sequence KPMTDISNFSLN. Composition is skewed to basic and acidic residues over residues 803 to 822 and 831 to 852; these read TERR…ERQL and REAE…DSIH.

The protein belongs to the TPX2 family. Detectable in immature oocytes.

Its subcellular location is the nucleus. The protein localises to the cytoplasm. The protein resides in the cytoskeleton. It localises to the spindle. Spindle assembly factor. Required for normal assembly of mitotic spindles. In Patiria pectinifera (Starfish), this protein is Targeting protein for Xklp2 homolog.